Here is a 506-residue protein sequence, read N- to C-terminus: Protein MGF 505-4R (506 aa).

It belongs to the asfivirus MGF 505 family.

Functionally, plays a role in virus cell tropism, and may be required for efficient virus replication in macrophages. The sequence is that of Protein MGF 505-4R from Ornithodoros (relapsing fever ticks).